A 460-amino-acid polypeptide reads, in one-letter code: Metal cation symporter ZIP8 (460 aa).

Positions 1–22 are cleaved as a signal peptide; the sequence is MAPGRAVAGLLLLAAAGLGGVA. Residues 23–132 lie on the Extracellular side of the membrane; it reads EGPGLAFSED…PSHSEVWGYG (110 aa). Residues N40 and N88 are each glycosylated (N-linked (GlcNAc...) asparagine). A helical membrane pass occupies residues 133-153; it reads FLSVTIINLASLLGLILTPLI. The Cytoplasmic portion of the chain corresponds to 154–160; sequence KKSYFPK. A helical membrane pass occupies residues 161–181; sequence ILTFFVGLAIGTLFSNAIFQL. Topologically, residues 182–191 are extracellular; the sequence is IPEAFGFDPK. Residues 192–212 traverse the membrane as a helical segment; that stretch reads VDSYVEKAVAVFGGFYLLFFF. Residues 213–365 are Cytoplasmic-facing; sequence ERMLKMLLKT…LNAGMSTRQA (153 aa). The XEXPHE-motif signature appears at 343-348; that stretch reads EEFPHE. The helical transmembrane segment at 366 to 386 threads the bilayer; sequence LLFNFLSACSCYVGLAFGILV. Residues 387 to 388 lie on the Extracellular side of the membrane; that stretch reads GN. A helical membrane pass occupies residues 389–409; the sequence is NFAPNIIFALAGGMFLYISLA. The Cytoplasmic segment spans residues 410–429; it reads DMFPEMNDMLREKVTGRKTD. Residues 430–450 form a helical membrane-spanning segment; the sequence is FTFFMIQNAGMLTGFTAILLI. At 451–460 the chain is on the extracellular side; that stretch reads TLYAGEIELE.

The protein belongs to the ZIP transporter (TC 2.A.5) family. In terms of assembly, homodimer. In terms of processing, N-glycosylated. N-glycosylation is not required for proper iron and zinc transport. In terms of tissue distribution, ubiquitously expressed. Expressed in thymus, placenta, lung, liver, pancreas, salivary gland and, to a lower extent, in spleen, testis, ovary, small intestine, colon, leukocyte, heart. Highest expression is observed in pancreas. Expressed by macrophages (at protein level). Expressed by microvascular capillary endothelial cells that constitute the blood-brain barrier (at protein level).

The protein localises to the cell membrane. It localises to the lysosome membrane. It is found in the apical cell membrane. Its subcellular location is the basolateral cell membrane. The enzyme catalyses Zn(2+)(out) + 2 hydrogencarbonate(out) = Zn(2+)(in) + 2 hydrogencarbonate(in). It carries out the reaction selenite(out) + Zn(2+)(out) + hydrogencarbonate(out) = selenite(in) + Zn(2+)(in) + hydrogencarbonate(in). It catalyses the reaction Mn(2+)(out) + 2 hydrogencarbonate(out) = Mn(2+)(in) + 2 hydrogencarbonate(in). The catalysed reaction is Fe(2+)(out) + 2 hydrogencarbonate(out) = Fe(2+)(in) + 2 hydrogencarbonate(in). The enzyme catalyses Cd(2+)(out) + 2 hydrogencarbonate(out) = Cd(2+)(in) + 2 hydrogencarbonate(in). It carries out the reaction Co(2+)(out) + 2 hydrogencarbonate(out) = Co(2+)(in) + 2 hydrogencarbonate(in). Functionally, electroneutral divalent metal cation:bicarbonate symporter of the plasma membrane mediating the cellular uptake of zinc and manganese, two divalent metal cations important for development, tissue homeostasis and immunity. Transports an electroneutral complex composed of a divalent metal cation and two bicarbonate anions or alternatively a bicarbonate and a selenite anion. Thereby, it also contributes to the cellular uptake of selenium, an essential trace metal and micronutrient. Also imports cadmium a non-essential metal which is cytotoxic and carcinogenic. May also transport iron and cobalt through membranes. Through zinc import, indirectly regulates the metal-dependent transcription factor MTF1 and the expression of some metalloproteases involved in cartilage catabolism and also probably heart development. Also indirectly regulates the expression of proteins involved in cell morphology and cytoskeleton organization. Indirectly controls innate immune function and inflammatory response by regulating zinc cellular uptake which in turn modulates the expression of genes specific of these processes. Protects, for instance, cells from injury and death at the onset of inflammation. By regulating zinc influx into monocytes also directly modulates their adhesion to endothelial cells and arteries. Reclaims manganese from the bile at the apical membrane of hepatocytes, thereby regulating the activity of the manganese-dependent enzymes through the systemic levels of the nutrient. Also participates in manganese reabsorption in the proximal tubule of the kidney. By mediating the extracellular uptake of manganese by cells of the blood-brain barrier, may also play a role in the transport of the micronutrient to the brain. With manganese cellular uptake also participates in mitochondrial proper function. Finally, also probably functions intracellularly, translocating zinc from lysosome to cytosol to indirectly enhance the expression of specific genes during TCR-mediated T cell activation. This chain is Metal cation symporter ZIP8, found in Homo sapiens (Human).